The sequence spans 130 residues: Small ribosomal subunit protein uS11 (130 aa).

This sequence belongs to the universal ribosomal protein uS11 family. In terms of assembly, part of the 30S ribosomal subunit. Interacts with proteins S7 and S18. Binds to IF-3.

Functionally, located on the platform of the 30S subunit, it bridges several disparate RNA helices of the 16S rRNA. Forms part of the Shine-Dalgarno cleft in the 70S ribosome. In Campylobacter fetus subsp. fetus (strain 82-40), this protein is Small ribosomal subunit protein uS11.